Reading from the N-terminus, the 233-residue chain is MFAKLFLVSVLLVGVNSRYVLVEEPGYYDKQYEEQPQQWVNSRVRRQAGALTINSDGTSGAVVKVPITGNENHKFSALGSVDLTNQMKLGAATAGLAYDNVNGHGATLTKTHIPGFGDKMTAAGKVNLFHNDNHDFSAKAFATKNMPNIPQVPNFNTVGAGVDYMFKDKIGASANAAHTDFINRNDYSLGGKLNLFKTPTTSLDFNAGWKKFDTPFFKSSWEPSTSFSFSKYF.

An N-terminal signal peptide occupies residues 1–17 (MFAKLFLVSVLLVGVNS). Residues 18-46 (RYVLVEEPGYYDKQYEEQPQQWVNSRVRR) constitute a propeptide that is removed on maturation.

It belongs to the attacin/sarcotoxin-2 family.

It is found in the secreted. Functionally, hemolymph antibacterial protein. The chain is Attacin-B from Hyalophora cecropia (Cecropia moth).